The sequence spans 267 residues: MRPRLQNFNALRARSYLTRLPLFTRLIVLAIIALSIASLQSVWNLREWGALIPEEISITNAYRLSTFPLIHLNVIHAILNLLALTPLMERFETEHGTLTSLALFFGPLTSIPAVAYVLIERCIFRANHGVLGASMWVFTLLAMESIQTYKSNPHFVIGSVNIPTWTTPLIMSLVVAALIPGTSLLGHLCGIAIGYVAGFGYAKLLAPPEWGLRWVENRLNLLKILPHYVSIDKTTYGRFGVLPTTNRPGPSGSAATELVGTTQRLGP.

6 helical membrane passes run 20–40 (LPLF…ASLQ), 67–87 (FPLI…LTPL), 99–119 (TSLA…YVLI), 126–146 (ANHG…MESI), 155–179 (FVIG…AALI), and 185–206 (LGHL…KLLA). Residue S134 is the Nucleophile of the active site. The active site involves H187. The disordered stretch occupies residues 247 to 267 (RPGPSGSAATELVGTTQRLGP).

Belongs to the peptidase S54 family.

It localises to the golgi apparatus membrane. The protein localises to the golgi apparatus. Its subcellular location is the cis-Golgi network membrane. It carries out the reaction Cleaves type-1 transmembrane domains using a catalytic dyad composed of serine and histidine that are contributed by different transmembrane domains.. Probable rhomboid-type serine protease that catalyzes intramembrane proteolysis. This chain is Rhomboid-type serine protease 2 (RBD2), found in Gibberella zeae (strain ATCC MYA-4620 / CBS 123657 / FGSC 9075 / NRRL 31084 / PH-1) (Wheat head blight fungus).